We begin with the raw amino-acid sequence, 554 residues long: Glutamine--tRNA ligase (554 aa).

The 'HIGH' region motif lies at 34–44; it reads PEPNGYLHIGH. ATP-binding positions include 35 to 37 and 41 to 47; these read EPN and HIGHAKS. L-glutamine-binding residues include aspartate 67 and tyrosine 212. ATP is bound by residues threonine 231, 261 to 262, and 269 to 271; these read RL and MSK. The 'KMSKS' region signature appears at 268-272; the sequence is VMSKR. The segment at 317–324 is interaction with tRNA; that stretch reads TKQDNTIE.

Belongs to the class-I aminoacyl-tRNA synthetase family. In terms of assembly, monomer.

Its subcellular location is the cytoplasm. It catalyses the reaction tRNA(Gln) + L-glutamine + ATP = L-glutaminyl-tRNA(Gln) + AMP + diphosphate. The sequence is that of Glutamine--tRNA ligase from Escherichia coli O17:K52:H18 (strain UMN026 / ExPEC).